Reading from the N-terminus, the 194-residue chain is Leucyl/phenylalanyl-tRNA--protein transferase (194 aa).

Belongs to the L/F-transferase family.

It localises to the cytoplasm. The enzyme catalyses N-terminal L-lysyl-[protein] + L-leucyl-tRNA(Leu) = N-terminal L-leucyl-L-lysyl-[protein] + tRNA(Leu) + H(+). It catalyses the reaction N-terminal L-arginyl-[protein] + L-leucyl-tRNA(Leu) = N-terminal L-leucyl-L-arginyl-[protein] + tRNA(Leu) + H(+). The catalysed reaction is L-phenylalanyl-tRNA(Phe) + an N-terminal L-alpha-aminoacyl-[protein] = an N-terminal L-phenylalanyl-L-alpha-aminoacyl-[protein] + tRNA(Phe). Functionally, functions in the N-end rule pathway of protein degradation where it conjugates Leu, Phe and, less efficiently, Met from aminoacyl-tRNAs to the N-termini of proteins containing an N-terminal arginine or lysine. This chain is Leucyl/phenylalanyl-tRNA--protein transferase, found in Chlorobaculum parvum (strain DSM 263 / NCIMB 8327) (Chlorobium vibrioforme subsp. thiosulfatophilum).